A 420-amino-acid polypeptide reads, in one-letter code: Transcription factor dbaG (420 aa).

The protein resides in the nucleus. Transcription factor that coregulates the expression of the gene cluster that mediates the biosynthesis of the antibiotic 2,4- dihydroxy-3-methyl-6-(2-oxopropyl)benzaldehyde (DHMBA) and its derivatives. Specifically positively regulates the expression of the FAD-dependent oxidoreductase dbaF. The sequence is that of Transcription factor dbaG from Emericella nidulans (strain FGSC A4 / ATCC 38163 / CBS 112.46 / NRRL 194 / M139) (Aspergillus nidulans).